Reading from the N-terminus, the 539-residue chain is Eukaryotic translation initiation factor 3 subunit L (539 aa).

The 209-residue stretch at 306 to 514 folds into the PCI domain; sequence TFSDILLYIQ…IHIADTKVSH (209 aa).

This sequence belongs to the eIF-3 subunit L family. In terms of assembly, component of the eukaryotic translation initiation factor 3 (eIF-3) complex. The eIF-3 complex interacts with pix.

It is found in the cytoplasm. Component of the eukaryotic translation initiation factor 3 (eIF-3) complex, which is involved in protein synthesis of a specialized repertoire of mRNAs and, together with other initiation factors, stimulates binding of mRNA and methionyl-tRNAi to the 40S ribosome. The eIF-3 complex specifically targets and initiates translation of a subset of mRNAs involved in cell proliferation. This Drosophila melanogaster (Fruit fly) protein is Eukaryotic translation initiation factor 3 subunit L.